The primary structure comprises 228 residues: Ribonuclease HII (228 aa).

Residues 26–214 enclose the RNase H type-2 domain; the sequence is RAVAGVDEVG…VRAHSRFPLD (189 aa). Positions 32, 33, and 124 each coordinate a divalent metal cation.

It belongs to the RNase HII family. It depends on Mn(2+) as a cofactor. Mg(2+) serves as cofactor.

The protein localises to the cytoplasm. It catalyses the reaction Endonucleolytic cleavage to 5'-phosphomonoester.. Its function is as follows. Endonuclease that specifically degrades the RNA of RNA-DNA hybrids. The chain is Ribonuclease HII from Solibacter usitatus (strain Ellin6076).